The primary structure comprises 148 residues: Gas vesicle protein J (148 aa).

Disordered regions lie at residues 1 to 21 and 118 to 148; these read MTTT…VIPT and EETT…QLEA. The span at 136 to 148 shows a compositional bias: polar residues; that stretch reads VNSQEGDNSQLEA.

It belongs to the gas vesicle GvpA family. As to quaternary structure, interacts with GvpA.

The protein localises to the gas vesicle. Its function is as follows. A minor component of the gas vesicle, might be involved in nucleating gas vesicle formation. Gas vesicles (GV) are hollow, gas filled proteinaceous nanostructures. During planktonic growth they allow positioning of the organism at a favorable depth for light or nutrient acquisition. In terms of biological role, cluster expression in E.coli (gvpA1-gvpA2-gvpC-gvpN-gvpJ-gvpK-gvpF-gvpG-gvpV-gvpW) allows cells to float and produces irregularly shaped gas vesicles. This is Gas vesicle protein J from Nostoc sp. (strain PCC 7120 / SAG 25.82 / UTEX 2576).